A 274-amino-acid chain; its full sequence is Octanoyltransferase LipM (274 aa).

Residues 32–244 form the BPL/LPL catalytic domain; the sequence is GEVPPTLRFY…GFARALGLTL (213 aa). The active-site Acyl-thioester intermediate is the Cys146.

It belongs to the octanoyltransferase LipM family. In terms of assembly, monomer.

It carries out the reaction octanoyl-[ACP] + L-lysyl-[protein] = N(6)-octanoyl-L-lysyl-[protein] + holo-[ACP] + H(+). The protein operates within protein modification; protein lipoylation via endogenous pathway; protein N(6)-(lipoyl)lysine from octanoyl-[acyl-carrier-protein]. Catalyzes the transfer of endogenously produced octanoic acid from octanoyl-acyl-carrier-protein onto the lipoyl domain of GcvH, an intermediate carrier during protein lipoylation. This chain is Octanoyltransferase LipM, found in Symbiobacterium thermophilum (strain DSM 24528 / JCM 14929 / IAM 14863 / T).